The following is a 202-amino-acid chain: Methylthioribulose-1-phosphate dehydratase (202 aa).

Residues histidine 93 and histidine 95 each contribute to the Zn(2+) site.

This sequence belongs to the aldolase class II family. MtnB subfamily. Requires Zn(2+) as cofactor.

It carries out the reaction 5-(methylsulfanyl)-D-ribulose 1-phosphate = 5-methylsulfanyl-2,3-dioxopentyl phosphate + H2O. The protein operates within amino-acid biosynthesis; L-methionine biosynthesis via salvage pathway; L-methionine from S-methyl-5-thio-alpha-D-ribose 1-phosphate: step 2/6. Functionally, catalyzes the dehydration of methylthioribulose-1-phosphate (MTRu-1-P) into 2,3-diketo-5-methylthiopentyl-1-phosphate (DK-MTP-1-P). This chain is Methylthioribulose-1-phosphate dehydratase, found in Klebsiella pneumoniae subsp. pneumoniae (strain ATCC 700721 / MGH 78578).